We begin with the raw amino-acid sequence, 176 residues long: MFDATTILGYKADGKAVIGGDGQVTFGDTVLKSNATKIRTLYEGKILAGFAGSTADAFNLFDMFEGILAEKRGDLFKSVIGFSKMWRKDKHLRQLEAMMIVLNTEHIFILSGTGDVVEPQDGKIAAIGSGGNYAISAARALDKHANLEPRELVQESLEVAGDLCIYTNKNIKILEL.

Residue T5 is part of the active site. Na(+)-binding residues include G161, C164, and T167.

This sequence belongs to the peptidase T1B family. HslV subfamily. As to quaternary structure, a double ring-shaped homohexamer of HslV is capped on each side by a ring-shaped HslU homohexamer. The assembly of the HslU/HslV complex is dependent on binding of ATP.

Its subcellular location is the cytoplasm. It catalyses the reaction ATP-dependent cleavage of peptide bonds with broad specificity.. With respect to regulation, allosterically activated by HslU binding. Protease subunit of a proteasome-like degradation complex believed to be a general protein degrading machinery. This is ATP-dependent protease subunit HslV from Sulfurovum sp. (strain NBC37-1).